The chain runs to 140 residues: Nucleoside diphosphate kinase (140 aa).

Positions 11, 59, 87, 93, 104, and 114 each coordinate ATP. The active-site Pros-phosphohistidine intermediate is the His117.

The protein belongs to the NDK family. Homotetramer. Requires Mg(2+) as cofactor.

The protein localises to the cytoplasm. It catalyses the reaction a 2'-deoxyribonucleoside 5'-diphosphate + ATP = a 2'-deoxyribonucleoside 5'-triphosphate + ADP. It carries out the reaction a ribonucleoside 5'-diphosphate + ATP = a ribonucleoside 5'-triphosphate + ADP. In terms of biological role, major role in the synthesis of nucleoside triphosphates other than ATP. The ATP gamma phosphate is transferred to the NDP beta phosphate via a ping-pong mechanism, using a phosphorylated active-site intermediate. The sequence is that of Nucleoside diphosphate kinase from Maricaulis maris (strain MCS10) (Caulobacter maris).